Consider the following 300-residue polypeptide: 4-hydroxy-tetrahydrodipicolinate synthase (300 aa).

Residue T57 participates in pyruvate binding. Y145 serves as the catalytic Proton donor/acceptor. The active-site Schiff-base intermediate with substrate is the K173. I213 contacts pyruvate.

This sequence belongs to the DapA family. As to quaternary structure, homotetramer; dimer of dimers.

Its subcellular location is the cytoplasm. It carries out the reaction L-aspartate 4-semialdehyde + pyruvate = (2S,4S)-4-hydroxy-2,3,4,5-tetrahydrodipicolinate + H2O + H(+). Its pathway is amino-acid biosynthesis; L-lysine biosynthesis via DAP pathway; (S)-tetrahydrodipicolinate from L-aspartate: step 3/4. Its function is as follows. Catalyzes the condensation of (S)-aspartate-beta-semialdehyde [(S)-ASA] and pyruvate to 4-hydroxy-tetrahydrodipicolinate (HTPA). In Corynebacterium jeikeium (strain K411), this protein is 4-hydroxy-tetrahydrodipicolinate synthase.